Here is an 85-residue protein sequence, read N- to C-terminus: Delta/kappa-theraphotoxin-Pm1a (85 aa).

Positions 1 to 19 are cleaved as a signal peptide; the sequence is MKTFVFIVLVALAFVLTAA. Residues 20–43 constitute a propeptide that is removed on maturation; sequence KEERANPSELVSALAELVMLDAER. 3 disulfide bridges follow: Cys50–Cys64, Cys57–Cys69, and Cys63–Cys77.

This sequence belongs to the neurotoxin 10 (Hwtx-1) family. In terms of tissue distribution, expressed by the venom gland.

The protein localises to the secreted. Functionally, multimodal toxin that enhances nociceptor excitability mainly by the simultaneous stimulation of repetitive firing (through Nav1.8/SCN10A channel current enhancement) and impairment of repolarization (by inhibiting delayed rectifier current of Kv2.1/KCNB1), with a potential contribution from tetrodotoxin-sensitive voltage-gated sodium channels (Nav) modified excitability. Enhances Nav1.8/SCN10A currents (EC(50)=1.1 uM), modifies the channel gating by a right-shift in steady-state inactivation and delays open-state inactivation. Also decreases Kv2.1/KCNB1 currents (IC(50)=0.43 uM) and causes a depolarizing shift in the voltage dependence of activation without change in steady-state inactivation. In addition, inhibits peak currents of human sodium channels (Nav1.1 to Nav1.7, IC(50)=0.38-2.3 uM) and delays fast inactivation of Nav1.1/SCN1A, Nav1.3/SCN3A, Nav1.6/SCN8A, and Nav1.7/SCN9A. In small dorsal root ganglion neurons, induces hyperexcitability by enhancing tetrodotoxin-resistant sodium currents, impairing repolarization and lowering the threshold of action potential firing, consistent with the severe pain associated with envenomation. In vivo, elicits nocifensive behavior in mice after intraplantar injection. The polypeptide is Delta/kappa-theraphotoxin-Pm1a (Pelinobius muticus (King baboon spider)).